The following is a 72-amino-acid chain: Translation initiation factor IF-1 (72 aa).

Residues 1–72 (MAKEGAIEVE…TRGRIVYRYK (72 aa)) form the S1-like domain.

Belongs to the IF-1 family. In terms of assembly, component of the 30S ribosomal translation pre-initiation complex which assembles on the 30S ribosome in the order IF-2 and IF-3, IF-1 and N-formylmethionyl-tRNA(fMet); mRNA recruitment can occur at any time during PIC assembly.

The protein localises to the cytoplasm. Functionally, one of the essential components for the initiation of protein synthesis. Stabilizes the binding of IF-2 and IF-3 on the 30S subunit to which N-formylmethionyl-tRNA(fMet) subsequently binds. Helps modulate mRNA selection, yielding the 30S pre-initiation complex (PIC). Upon addition of the 50S ribosomal subunit IF-1, IF-2 and IF-3 are released leaving the mature 70S translation initiation complex. The sequence is that of Translation initiation factor IF-1 from Corynebacterium diphtheriae (strain ATCC 700971 / NCTC 13129 / Biotype gravis).